A 139-amino-acid chain; its full sequence is MHRSTLPKRARVLKRKQFLYISRTGSHCQGSQVIFQVAPSKYPGCCKLGITVSKKFGKAHKRNYFKRLVREAFRQKRHSLPACQIVVMPKNKQQPRFRDLLQDFSQQIPEAVESKCAKNKLTTGVEYNPKNEKCETAPL.

The protein belongs to the RnpA family. In terms of assembly, consists of a catalytic RNA component (M1 or rnpB) and a protein subunit.

It carries out the reaction Endonucleolytic cleavage of RNA, removing 5'-extranucleotides from tRNA precursor.. In terms of biological role, RNaseP catalyzes the removal of the 5'-leader sequence from pre-tRNA to produce the mature 5'-terminus. It can also cleave other RNA substrates such as 4.5S RNA. The protein component plays an auxiliary but essential role in vivo by binding to the 5'-leader sequence and broadening the substrate specificity of the ribozyme. The sequence is that of Ribonuclease P protein component from Chlamydia felis (strain Fe/C-56) (Chlamydophila felis).